A 436-amino-acid chain; its full sequence is GTPase Der (436 aa).

EngA-type G domains are found at residues 4–167 and 175–351; these read PTVA…PTEV and IRFS…ESQN. Residues 10 to 17, 57 to 61, 119 to 122, 181 to 188, 229 to 233, and 294 to 297 each bind GTP; these read GRPNVGKS, DTGGI, NKVD, DTAGM, and NKWD. Positions 352–436 constitute a KH-like domain; it reads RRISSAVLND…PIHLIARKRK (85 aa).

The protein belongs to the TRAFAC class TrmE-Era-EngA-EngB-Septin-like GTPase superfamily. EngA (Der) GTPase family. As to quaternary structure, associates with the 50S ribosomal subunit.

Functionally, GTPase that plays an essential role in the late steps of ribosome biogenesis. The sequence is that of GTPase Der from Streptococcus thermophilus (strain CNRZ 1066).